The following is a 37-amino-acid chain: Large ribosomal subunit protein bL36 (37 aa).

Belongs to the bacterial ribosomal protein bL36 family.

The polypeptide is Large ribosomal subunit protein bL36 (Bifidobacterium adolescentis (strain ATCC 15703 / DSM 20083 / NCTC 11814 / E194a)).